A 78-amino-acid chain; its full sequence is MEFREQVLNLLAEVAENDIVKENPDVEIFEEGIIDSFQTVGLLLEIQNKLDIEVSIMDFDRDEWATPNKIVEALEELR.

In terms of domain architecture, Carrier spans 1-78; the sequence is MEFREQVLNL…KIVEALEELR (78 aa). At Ser-36 the chain carries O-(pantetheine 4'-phosphoryl)serine.

The protein belongs to the DltC family. In terms of processing, 4'-phosphopantetheine is transferred from CoA to a specific serine of apo-DCP.

It is found in the cytoplasm. It participates in cell wall biogenesis; lipoteichoic acid biosynthesis. Carrier protein involved in the D-alanylation of lipoteichoic acid (LTA). The loading of thioester-linked D-alanine onto DltC is catalyzed by D-alanine--D-alanyl carrier protein ligase DltA. The DltC-carried D-alanyl group is further transferred to cell membrane phosphatidylglycerol (PG) by forming an ester bond, probably catalyzed by DltD. D-alanylation of LTA plays an important role in modulating the properties of the cell wall in Gram-positive bacteria, influencing the net charge of the cell wall. The polypeptide is D-alanyl carrier protein (Staphylococcus aureus (strain Mu50 / ATCC 700699)).